Consider the following 944-residue polypeptide: Breast cancer type 2 susceptibility protein homolog (944 aa).

Composition is skewed to basic and acidic residues over residues 325–348 (KKVK…ESKI) and 415–431 (NSIK…ETPN). Disordered regions lie at residues 325–354 (KKVK…ASCD) and 415–440 (NSIK…SSHQ). 3 BRCA2 repeats span residues 543 to 577 (AEPE…EFQS), 644 to 678 (NESQ…QSRA), and 719 to 753 (SETE…EFQA). 2 disordered regions span residues 823–854 (LCSQ…LDQA) and 876–944 (SSTE…RSRY). Composition is skewed to polar residues over residues 838-852 (IHSS…SPLD) and 876-885 (SSTETSTSCA). Basic and acidic residues predominate over residues 904-921 (ADRDLNRSKDCAKNRQDA). Basic residues predominate over residues 932–944 (KKSRRLGLSRSRY).

As to quaternary structure, interacts with Rad9 and spn-A/Rad51.

It is found in the nucleus. Functionally, involved in and required for double-strand break repair by meiotic and mitotic homologous recombination. During meiosis, has a dual role in the repair of meiotic double-stranded breaks and the efficient activation of the meiotic recombination checkpoint. This Drosophila simulans (Fruit fly) protein is Breast cancer type 2 susceptibility protein homolog.